A 252-amino-acid polypeptide reads, in one-letter code: Adenosylcobinamide-GDP ribazoletransferase (252 aa).

Transmembrane regions (helical) follow at residues 36 to 56, 59 to 79, 109 to 129, 133 to 153, 170 to 192, 199 to 218, and 228 to 248; these read LVPI…MLLV, FFYK…TGGI, VGTN…VILT, PAYM…GSIV, SFID…VIFL, GYII…KYFT, and ILGA…YAVL.

It belongs to the CobS family. Mg(2+) is required as a cofactor.

The protein localises to the cell membrane. The catalysed reaction is alpha-ribazole + adenosylcob(III)inamide-GDP = adenosylcob(III)alamin + GMP + H(+). It carries out the reaction alpha-ribazole 5'-phosphate + adenosylcob(III)inamide-GDP = adenosylcob(III)alamin 5'-phosphate + GMP + H(+). It functions in the pathway cofactor biosynthesis; adenosylcobalamin biosynthesis; adenosylcobalamin from cob(II)yrinate a,c-diamide: step 7/7. Joins adenosylcobinamide-GDP and alpha-ribazole to generate adenosylcobalamin (Ado-cobalamin). Also synthesizes adenosylcobalamin 5'-phosphate from adenosylcobinamide-GDP and alpha-ribazole 5'-phosphate. This chain is Adenosylcobinamide-GDP ribazoletransferase, found in Clostridium acetobutylicum (strain ATCC 824 / DSM 792 / JCM 1419 / IAM 19013 / LMG 5710 / NBRC 13948 / NRRL B-527 / VKM B-1787 / 2291 / W).